A 221-amino-acid chain; its full sequence is Adenylate kinase (221 aa).

Residue 10-15 coordinates ATP; that stretch reads GAGKGT. The interval 30-59 is NMP; the sequence is STGDMLRAAVKAGTPLGLEAKRFMDAGELV. AMP is bound by residues Thr31, Arg36, 57 to 59, 85 to 88, and Gln92; these read ELV and GFPR. The LID stretch occupies residues 122-159; it reads GRRSHAASGRTYHVKFNPPKVEGLDDVTGEPLIQRDDD. ATP contacts are provided by residues Arg123 and 132 to 133; that span reads TY. The AMP site is built by Arg156 and Arg167. Gly207 contributes to the ATP binding site.

Belongs to the adenylate kinase family. In terms of assembly, monomer.

The protein resides in the cytoplasm. It catalyses the reaction AMP + ATP = 2 ADP. The protein operates within purine metabolism; AMP biosynthesis via salvage pathway; AMP from ADP: step 1/1. Functionally, catalyzes the reversible transfer of the terminal phosphate group between ATP and AMP. Plays an important role in cellular energy homeostasis and in adenine nucleotide metabolism. The polypeptide is Adenylate kinase (Paraburkholderia xenovorans (strain LB400)).